A 205-amino-acid polypeptide reads, in one-letter code: Ribosomal RNA small subunit methyltransferase G (205 aa).

S-adenosyl-L-methionine is bound by residues G76, L81, 127-128 (IE), and R140.

This sequence belongs to the methyltransferase superfamily. RNA methyltransferase RsmG family.

The protein localises to the cytoplasm. It carries out the reaction guanosine(527) in 16S rRNA + S-adenosyl-L-methionine = N(7)-methylguanosine(527) in 16S rRNA + S-adenosyl-L-homocysteine. In terms of biological role, specifically methylates the N7 position of guanine in position 527 of 16S rRNA. The polypeptide is Ribosomal RNA small subunit methyltransferase G (Francisella tularensis subsp. tularensis (strain FSC 198)).